We begin with the raw amino-acid sequence, 505 residues long: Putative thymidine phosphorylase (505 aa).

This sequence belongs to the thymidine/pyrimidine-nucleoside phosphorylase family. Type 2 subfamily.

It carries out the reaction thymidine + phosphate = 2-deoxy-alpha-D-ribose 1-phosphate + thymine. The sequence is that of Putative thymidine phosphorylase from Parvibaculum lavamentivorans (strain DS-1 / DSM 13023 / NCIMB 13966).